Here is a 359-residue protein sequence, read N- to C-terminus: Elongation factor Ts 1, mitochondrial (359 aa).

A compositionally biased stretch (low complexity) spans 323–341 (GKAAPAPKAEEPAAVAPAK). The tract at residues 323–345 (GKAAPAPKAEEPAAVAPAKADAE) is disordered.

This sequence belongs to the EF-Ts family.

It is found in the mitochondrion. Functionally, associates with the EF-Tu.GDP complex and induces the exchange of GDP to GTP. It remains bound to the aminoacyl-tRNA.EF-Tu.GTP complex up to the GTP hydrolysis stage on the ribosome. This is Elongation factor Ts 1, mitochondrial from Thalassiosira pseudonana (Marine diatom).